Here is a 185-residue protein sequence, read N- to C-terminus: Ribonuclease HII (185 aa).

The RNase H type-2 domain occupies 1–185 (MKICGIDEAG…LKHLQGILEF (185 aa)). 3 residues coordinate a divalent metal cation: D7, E8, and D96.

Belongs to the RNase HII family. The cofactor is Mn(2+). Mg(2+) is required as a cofactor.

It localises to the cytoplasm. The catalysed reaction is Endonucleolytic cleavage to 5'-phosphomonoester.. In terms of biological role, endonuclease that specifically degrades the RNA of RNA-DNA hybrids. This is Ribonuclease HII from Campylobacter hominis (strain ATCC BAA-381 / DSM 21671 / CCUG 45161 / LMG 19568 / NCTC 13146 / CH001A).